The primary structure comprises 149 residues: Transcriptional repressor NrdR (149 aa).

Residues 3-34 (CPFCFAVDTKVIDSRLVGEGSSVRRRRQCLVC) fold into a zinc finger. The 91-residue stretch at 49-139 (PRVVKSNDVR…VYRSFEDIKE (91 aa)) folds into the ATP-cone domain.

It belongs to the NrdR family. Zn(2+) serves as cofactor.

In terms of biological role, negatively regulates transcription of bacterial ribonucleotide reductase nrd genes and operons by binding to NrdR-boxes. This chain is Transcriptional repressor NrdR, found in Escherichia coli O139:H28 (strain E24377A / ETEC).